The primary structure comprises 293 residues: D-alanine--D-alanine ligase (293 aa).

Residues 98-291 form the ATP-grasp domain; it reads KIIWEQHSLT…FNKLVTSIIN (194 aa). An ATP-binding site is contributed by 124-177; the sequence is NFPLPWAVKPTLEGSSIGISKVDNQMQLNDALMLAWQYAPYALIEQWIKGDEYT. Positions 245, 258, and 260 each coordinate Mg(2+).

It belongs to the D-alanine--D-alanine ligase family. It depends on Mg(2+) as a cofactor. Requires Mn(2+) as cofactor.

It localises to the cytoplasm. It catalyses the reaction 2 D-alanine + ATP = D-alanyl-D-alanine + ADP + phosphate + H(+). The protein operates within cell wall biogenesis; peptidoglycan biosynthesis. In terms of biological role, cell wall formation. The sequence is that of D-alanine--D-alanine ligase from Vesicomyosocius okutanii subsp. Calyptogena okutanii (strain HA).